Reading from the N-terminus, the 513-residue chain is Putative ribose/galactose/methyl galactoside import ATP-binding protein (513 aa).

2 consecutive ABC transporter domains span residues 24-260 (LSAE…VGRE) and 270-510 (VPIG…VMEL). 56-63 (GENGAGKS) contributes to the ATP binding site.

It belongs to the ABC transporter superfamily. Carbohydrate importer 2 (CUT2) (TC 3.A.1.2) family.

It localises to the cell inner membrane. The enzyme catalyses D-ribose(out) + ATP + H2O = D-ribose(in) + ADP + phosphate + H(+). It catalyses the reaction D-galactose(out) + ATP + H2O = D-galactose(in) + ADP + phosphate + H(+). Part of an ABC transporter complex involved in carbohydrate import. Could be involved in ribose, galactose and/or methyl galactoside import. Responsible for energy coupling to the transport system. The sequence is that of Putative ribose/galactose/methyl galactoside import ATP-binding protein from Rhizobium johnstonii (strain DSM 114642 / LMG 32736 / 3841) (Rhizobium leguminosarum bv. viciae).